The chain runs to 338 residues: RNA 3'-terminal phosphate cyclase (338 aa).

ATP-binding positions include Gln103 and 283 to 287; that span reads YLADQ. The active-site Tele-AMP-histidine intermediate is the His308.

This sequence belongs to the RNA 3'-terminal cyclase family. Type 1 subfamily.

The protein localises to the cytoplasm. The enzyme catalyses a 3'-end 3'-phospho-ribonucleotide-RNA + ATP = a 3'-end 2',3'-cyclophospho-ribonucleotide-RNA + AMP + diphosphate. Catalyzes the conversion of 3'-phosphate to a 2',3'-cyclic phosphodiester at the end of RNA. The mechanism of action of the enzyme occurs in 3 steps: (A) adenylation of the enzyme by ATP; (B) transfer of adenylate to an RNA-N3'P to produce RNA-N3'PP5'A; (C) and attack of the adjacent 2'-hydroxyl on the 3'-phosphorus in the diester linkage to produce the cyclic end product. The biological role of this enzyme is unknown but it is likely to function in some aspects of cellular RNA processing. The protein is RNA 3'-terminal phosphate cyclase of Escherichia coli O139:H28 (strain E24377A / ETEC).